The sequence spans 126 residues: Large ribosomal subunit protein bL12 (126 aa).

This sequence belongs to the bacterial ribosomal protein bL12 family. As to quaternary structure, homodimer. Part of the ribosomal stalk of the 50S ribosomal subunit. Forms a multimeric L10(L12)X complex, where L10 forms an elongated spine to which 2 to 4 L12 dimers bind in a sequential fashion. Binds GTP-bound translation factors.

Forms part of the ribosomal stalk which helps the ribosome interact with GTP-bound translation factors. Is thus essential for accurate translation. The polypeptide is Large ribosomal subunit protein bL12 (Nitrosospira multiformis (strain ATCC 25196 / NCIMB 11849 / C 71)).